The following is a 239-amino-acid chain: MTQQIKYKRVLLKLSGESLMGSDPFGINHDTIVQTVGEIAEVVKMGVQVGIVVGGGNIFRGVSAQAGSMDRATADYMGMMATVMNALALKDAFETLGIKARVQSALSMQQIAETYARPKAIQYLEEGKVVIFAAGTGNPFFTTDTAAALRGAEMNCDVMLKATNVDGVYTADPKKDSSATRYETITFDEALLKNLKVMDATAFALCRERKLNIVVFGIAKEGSLKRVVTGENEGTLVHC.

13–16 provides a ligand contact to ATP; sequence KLSG. Glycine 55 is a UMP binding site. Positions 56 and 60 each coordinate ATP. Residues aspartate 75 and 136 to 143 each bind UMP; that span reads TGNPFFTT. 4 residues coordinate ATP: threonine 163, asparagine 164, tyrosine 169, and aspartate 172.

It belongs to the UMP kinase family. In terms of assembly, homohexamer.

Its subcellular location is the cytoplasm. It catalyses the reaction UMP + ATP = UDP + ADP. It functions in the pathway pyrimidine metabolism; CTP biosynthesis via de novo pathway; UDP from UMP (UMPK route): step 1/1. Inhibited by UTP. Functionally, catalyzes the reversible phosphorylation of UMP to UDP. The chain is Uridylate kinase from Neisseria meningitidis serogroup C / serotype 2a (strain ATCC 700532 / DSM 15464 / FAM18).